Here is a 1070-residue protein sequence, read N- to C-terminus: DNA-directed RNA polymerase subunit beta (1070 aa).

It belongs to the RNA polymerase beta chain family. In terms of assembly, in plastids the minimal PEP RNA polymerase catalytic core is composed of four subunits: alpha, beta, beta', and beta''. When a (nuclear-encoded) sigma factor is associated with the core the holoenzyme is formed, which can initiate transcription.

The protein localises to the plastid. Its subcellular location is the chloroplast. The catalysed reaction is RNA(n) + a ribonucleoside 5'-triphosphate = RNA(n+1) + diphosphate. Functionally, DNA-dependent RNA polymerase catalyzes the transcription of DNA into RNA using the four ribonucleoside triphosphates as substrates. The sequence is that of DNA-directed RNA polymerase subunit beta from Gossypium barbadense (Sea Island cotton).